Consider the following 418-residue polypeptide: MLPNTGKLAGCTVFITGASRGIGKAIALKAAKDGANIVIAAKTAQAHPKLPGTIYTAAEEIKAAGGKALPCIVDVRDEEQISSAVEKAVEKFGGIDILVNNASAISLTNTLETPTKKVDLMMNVNTRGTYLTSKACIPYLKKSKVAHILNLSPPLNLNPLWFKQHCAYTIAKYGMSMCVLGMAEEFKGEIAVNALWPRTAIHTAAMDMLGGSGVESQCRKVDIMADAAYCIFKKPKSFTGNFIIDENILKEEGIKNFDVYAITPGHPLLPDFFLDEQPAMVTKKADSYGAVPELKEEKTQPPPKARSGAVEETFRIVKDSLSDDIVKATQAVYQFELSGEDGGTWFLDLKSKGGNIGYGEPSDQADVVMSMSTDDFVKMFSGKLKPTMAFMSGKLKIKGNMALAIKLEKLMNQMNSKL.

Residues 17-23 (GASRGIG), Lys-42, and Asp-74 each bind NADP(+). N6-(2-hydroxyisobutyryl)lysine is present on Lys-42. Lys-116 carries the N6-acetyllysine modification. The Proton acceptor role is filled by Tyr-168. Residue Lys-172 participates in NADP(+) binding. Residues 306–415 (RSGAVEETFR…KLEKLMNQMN (110 aa)) form the SCP2 domain. Lys-318 carries the post-translational modification N6-succinyllysine.

Belongs to the short-chain dehydrogenases/reductases (SDR) family.

Its subcellular location is the peroxisome. It localises to the mitochondrion. Has apparently no steroid dehydrogenase activity. Controls bile acid (BA) and lipid metabolism in response to nutritional cues. The sequence is that of Hydroxysteroid dehydrogenase-like protein 2 (HSDL2) from Bos taurus (Bovine).